A 375-amino-acid chain; its full sequence is G-protein coupled estrogen receptor 1 (375 aa).

Residue Met-1 is modified to N-acetylmethionine. The Extracellular segment spans residues 1–62 (MAATTPAQDV…QQYVIALFLS (62 aa)). Asn-32 and Asn-44 each carry an N-linked (GlcNAc...) asparagine glycan. A helical transmembrane segment spans residues 63 to 84 (CLYTIFLFPIGFVGNILILVVN). The Cytoplasmic segment spans residues 85–96 (ISFREKMTIPDL). A helical transmembrane segment spans residues 97-120 (YFINLAAADLILVADSLIEVFNLD). Residues 121–132 (EQYYDIAVLCTF) lie on the Extracellular side of the membrane. A disulfide bond links Cys-130 and Cys-207. A helical membrane pass occupies residues 133-153 (MSLFLQINMYSSVFFLTWMSF). The Cytoplasmic portion of the chain corresponds to 154–175 (DRYLALAKAMRCGLFRTKHHAR). The helical transmembrane segment at 176–194 (LSCGLIWMASVSATLVPFT) threads the bilayer. The Extracellular segment spans residues 195-220 (AVHLRHTEEACFCFADVREVQWLEVT). The helical transmembrane segment at 221–236 (LGFIVPFAIIGLCYSL) threads the bilayer. The Cytoplasmic portion of the chain corresponds to 237–259 (IVRALIRAHRHRGLRPRRQKALR). The helical transmembrane segment at 260-280 (MIFAVVLVFFICWLPENVFIS) threads the bilayer. The Extracellular segment spans residues 281-306 (VHLLQWAQPGDTPCKQSFRHAYPLTG). The helical transmembrane segment at 307 to 327 (HIVNLAAFSNSCLSPLIYSFL) threads the bilayer. The Cytoplasmic segment spans residues 328-375 (GETFRDKLRLYVAQKTSLPALNRFCHATLKAVIPDSTEQSDVKFSSAV).

Belongs to the G-protein coupled receptor 1 family. In terms of assembly, homodimer. Heterodimer; heterodimerizes with other G-protein-coupled receptor (GPCRs) like CRHR1, HTR1A and PAQR8. Interacts with RAMP3; the interaction confers proper subcellular localization and function in cardioprotection. Interacts with KRT7 and KRT8. Interacts with EGFR; the interaction increases after agonist-induced stimulation in cancer-associated fibroblasts (CAF). Interacts with EGFR and ESR1. Interacts (via C-terminus tail motif) with DLG4 (via N-terminus tandem pair of PDZ domains); the interaction is direct and induces the increase of GPER1 protein levels residing at the plasma membrane surface in a estradiol-independent manner. Post-translationally, ubiquitinated; ubiquitination occurs at the plasma membrane and leads to proteasome-mediated degradation. In terms of processing, glycosylated. Expressed in the brain. Expressed in neurons of the hippocampus, hypothalamic paraventricular nucleus (PVN), supraoptic nucleus (SON) and the median eminence. Expressed in magnocellular neurosecretory cells (MNCs) which secrete oxytocin but not in MNCs which secrete vasopressin. Expressed in glial cells. Expressed in the nucleus ambiguous. Expressed in epithelial cells, in pachytene spermatocytes (PS) (at protein level). Expressed strongly in vascular endothelial cells and poorly in vascular smooth muscle cells (VSMC). Expressed in the brain, lung, pituitary gland, adrenal medulla, renal pelvis and ovary. Expressed in CA1 hippocampus. Expressed weakly in heart, skeletal muscle and kidney.

Its subcellular location is the nucleus. It localises to the cytoplasm. The protein resides in the perinuclear region. The protein localises to the cytoskeleton. It is found in the cytoplasmic vesicle membrane. Its subcellular location is the cell membrane. It localises to the basolateral cell membrane. The protein resides in the endoplasmic reticulum membrane. The protein localises to the early endosome. It is found in the recycling endosome. Its subcellular location is the golgi apparatus. It localises to the trans-Golgi network. The protein resides in the golgi apparatus membrane. The protein localises to the cell projection. It is found in the dendrite. Its subcellular location is the dendritic spine membrane. It localises to the axon. The protein resides in the postsynaptic density. The protein localises to the mitochondrion membrane. In terms of biological role, G-protein coupled estrogen receptor that binds to 17-beta-estradiol (E2) with high affinity, leading to rapid and transient activation of numerous intracellular signaling pathways. Stimulates cAMP production, calcium mobilization and tyrosine kinase Src inducing the release of heparin-bound epidermal growth factor (HB-EGF) and subsequent transactivation of the epidermal growth factor receptor (EGFR), activating downstream signaling pathways such as PI3K/Akt and ERK/MAPK. Mediates pleiotropic functions among others in the cardiovascular, endocrine, reproductive, immune and central nervous systems. Has a role in cardioprotection by reducing cardiac hypertrophy and perivascular fibrosis in a RAMP3-dependent manner. Regulates arterial blood pressure by stimulating vasodilation and reducing vascular smooth muscle and microvascular endothelial cell proliferation. Plays a role in blood glucose homeostasis contributing to the insulin secretion response by pancreatic beta cells. Triggers mitochondrial apoptosis during pachytene spermatocyte differentiation. Stimulates uterine epithelial cell proliferation. Enhances uterine contractility in response to oxytocin. Contributes to thymic atrophy by inducing apoptosis. Attenuates TNF-mediated endothelial expression of leukocyte adhesion molecules. Promotes neuritogenesis in developing hippocampal neurons. Plays a role in acute neuroprotection against NMDA-induced excitotoxic neuronal death. Increases firing activity and intracellular calcium oscillations in luteinizing hormone-releasing hormone (LHRH) neurons. Inhibits early osteoblast proliferation at growth plate during skeletal development. Inhibits mature adipocyte differentiation and lipid accumulation. Involved in the recruitment of beta-arrestin 2 ARRB2 at the plasma membrane in epithelial cells. Also functions as a receptor for aldosterone mediating rapid regulation of vascular contractibility through the PI3K/ERK signaling pathway. Involved in cancer progression regulation. Stimulates cancer-associated fibroblast (CAF) proliferation by a rapid genomic response through the EGFR/ERK transduction pathway. Associated with EGFR, may act as a transcription factor activating growth regulatory genes (c-fos, cyclin D1). Promotes integrin alpha-5/beta-1 and fibronectin (FN) matrix assembly in breast cancer cells. This is G-protein coupled estrogen receptor 1 (Gper1) from Rattus norvegicus (Rat).